A 255-amino-acid polypeptide reads, in one-letter code: tRNA pseudouridine synthase A (255 aa).

The active-site Nucleophile is the Asp-52. Tyr-111 is a substrate binding site.

Belongs to the tRNA pseudouridine synthase TruA family. As to quaternary structure, homodimer.

It catalyses the reaction uridine(38/39/40) in tRNA = pseudouridine(38/39/40) in tRNA. Its function is as follows. Formation of pseudouridine at positions 38, 39 and 40 in the anticodon stem and loop of transfer RNAs. This is tRNA pseudouridine synthase A from Nitrobacter winogradskyi (strain ATCC 25391 / DSM 10237 / CIP 104748 / NCIMB 11846 / Nb-255).